Consider the following 252-residue polypeptide: Imidazole glycerol phosphate synthase subunit HisF (252 aa).

Catalysis depends on residues aspartate 11 and aspartate 130.

It belongs to the HisA/HisF family. As to quaternary structure, heterodimer of HisH and HisF.

It localises to the cytoplasm. The catalysed reaction is 5-[(5-phospho-1-deoxy-D-ribulos-1-ylimino)methylamino]-1-(5-phospho-beta-D-ribosyl)imidazole-4-carboxamide + L-glutamine = D-erythro-1-(imidazol-4-yl)glycerol 3-phosphate + 5-amino-1-(5-phospho-beta-D-ribosyl)imidazole-4-carboxamide + L-glutamate + H(+). It functions in the pathway amino-acid biosynthesis; L-histidine biosynthesis; L-histidine from 5-phospho-alpha-D-ribose 1-diphosphate: step 5/9. In terms of biological role, IGPS catalyzes the conversion of PRFAR and glutamine to IGP, AICAR and glutamate. The HisF subunit catalyzes the cyclization activity that produces IGP and AICAR from PRFAR using the ammonia provided by the HisH subunit. The polypeptide is Imidazole glycerol phosphate synthase subunit HisF (Staphylococcus saprophyticus subsp. saprophyticus (strain ATCC 15305 / DSM 20229 / NCIMB 8711 / NCTC 7292 / S-41)).